A 528-amino-acid chain; its full sequence is Probable histone-arginine methyltransferase 1.4 (528 aa).

Met1 carries the N-acetylmethionine modification. The region spanning 144-459 (EAASAKMYFH…QSYTINLTLS (316 aa)) is the SAM-dependent MTase PRMT-type domain. Gln161, Arg170, Gly194, Glu216, and Glu246 together coordinate S-adenosyl-L-methionine. Catalysis depends on residues Glu260 and Glu269. Thr274 serves as a coordination point for S-adenosyl-L-methionine.

It belongs to the class I-like SAM-binding methyltransferase superfamily. Protein arginine N-methyltransferase family.

Its subcellular location is the nucleus. The protein resides in the cytoplasm. It carries out the reaction L-arginyl-[protein] + 2 S-adenosyl-L-methionine = N(omega),N(omega)-dimethyl-L-arginyl-[protein] + 2 S-adenosyl-L-homocysteine + 2 H(+). In terms of biological role, methylates (mono- and asymmetric dimethylation) the guanidino nitrogens of arginyl residues in several proteins involved in DNA packaging, transcription regulation, and mRNA stability. Recruited to promoters upon gene activation, methylates histone H3 and activates transcription via chromatin remodeling. This Arabidopsis thaliana (Mouse-ear cress) protein is Probable histone-arginine methyltransferase 1.4 (PRMT14).